The sequence spans 498 residues: Cystathionine beta-synthase (498 aa).

The tract at residues 1-25 (MSAPEGPSKCTWTPNTTENTPHTTR) is disordered. Low complexity predominate over residues 11 to 22 (TWTPNTTENTPH). N6-(pyridoxal phosphate)lysine is present on Lys73. Pyridoxal 5'-phosphate-binding positions include Asn103, 210–214 (GTGGT), and Ser302. CBS domains are found at residues 374 to 430 (TLPK…KKAV) and 435 to 497 (VSKV…SQQK).

Belongs to the cysteine synthase/cystathionine beta-synthase family. Pyridoxal 5'-phosphate serves as cofactor.

The catalysed reaction is L-homocysteine + L-serine = L,L-cystathionine + H2O. Its pathway is amino-acid biosynthesis; L-cysteine biosynthesis; L-cysteine from L-homocysteine and L-serine: step 1/2. This Dictyostelium discoideum (Social amoeba) protein is Cystathionine beta-synthase (cysB).